The chain runs to 31 residues: Mycofactocin precursor peptide (31 aa).

It belongs to the mycofactocin precursor peptide family. In terms of processing, the post-translational modifications that lead to mycofactocin involve oxidative decarboxylation of the C-terminal tyrosine residue catalyzed by MftC, introduction of a tyramine-valine cross-link, removal of the modified C-terminal dipeptide by MftE. The released dipeptide then undergoes oxidative deamination by MftD, glycosylation by MftF and methylation by an unknown enzyme.

Precursor peptide that leads to mycofactocin (MFT) after extensive post-translational modifications by enzymes encoded by adjacent genes. Mycofactocin acts as a redox cofactor of nicotinamide-dependent oxidoreductases encoded in the same locus. Is required for the in vivo ethanol assimilation in M.smegmatis. This chain is Mycofactocin precursor peptide, found in Mycolicibacterium smegmatis (strain ATCC 700084 / mc(2)155) (Mycobacterium smegmatis).